Here is a 209-residue protein sequence, read N- to C-terminus: J domain-containing protein spf31 (209 aa).

The 66-residue stretch at 31–96 (NAYDVLDILP…KIRESLDSAY (66 aa)) folds into the J domain. Disordered stretches follow at residues 149–175 (ANQQREQARQDEIARERKRRVESEKVW) and 187–209 (QDFLHKTKKNNLKKKNKKPRVLG). Residues 154–175 (EQARQDEIARERKRRVESEKVW) show a composition bias toward basic and acidic residues. The segment covering 192–209 (KTKKNNLKKKNKKPRVLG) has biased composition (basic residues).

This Schizosaccharomyces pombe (strain 972 / ATCC 24843) (Fission yeast) protein is J domain-containing protein spf31 (spf31).